The primary structure comprises 215 residues: ER lumen protein-retaining receptor B (215 aa).

6 helical membrane-spanning segments follow: residues 6–26 (LAGD…IHTI), 55–77 (FVSL…IVWY), 98–118 (WFLV…FTFL), 120–140 (VLWT…LVLL), 149–169 (LTGQ…LNWI), and 178–198 (FVHW…ADFF).

The protein belongs to the ERD2 family.

The protein localises to the golgi apparatus membrane. It is found in the endoplasmic reticulum membrane. Determines the specificity of the luminal endoplasmic reticulum protein retention system. Required for the retro-transport of calreticulin-3 (CRT3) from the Golgi to the ER. Specifically required for elongation factor Tu receptor (EFR) function in response to the pathogen-associated molecular pattern (PAMP) elf18. This is ER lumen protein-retaining receptor B (ERD2B) from Arabidopsis thaliana (Mouse-ear cress).